The following is a 555-amino-acid chain: Hydroxylamine reductase (555 aa).

4 residues coordinate [4Fe-4S] cluster: cysteine 5, cysteine 8, cysteine 17, and cysteine 23. Histidine 248, glutamate 272, cysteine 316, cysteine 408, cysteine 436, cysteine 461, glutamate 496, and lysine 498 together coordinate hybrid [4Fe-2O-2S] cluster. Position 408 is a cysteine persulfide (cysteine 408).

It belongs to the HCP family. [4Fe-4S] cluster is required as a cofactor. The cofactor is hybrid [4Fe-2O-2S] cluster.

It is found in the cytoplasm. The enzyme catalyses A + NH4(+) + H2O = hydroxylamine + AH2 + H(+). In terms of biological role, catalyzes the reduction of hydroxylamine to form NH(3) and H(2)O. In Natranaerobius thermophilus (strain ATCC BAA-1301 / DSM 18059 / JW/NM-WN-LF), this protein is Hydroxylamine reductase.